A 737-amino-acid polypeptide reads, in one-letter code: NAD-dependent protein deacetylase sirtuin-1 (737 aa).

Residues 1 to 28 (MADEVALALQAAGSPSAAAAMEAASQPA) show a composition bias toward low complexity. 2 disordered regions span residues 1–56 (MADE…AVAP) and 75–125 (EAAG…EAAA). A2 bears the N-acetylalanine mark. Positions 2 to 131 (ADEVALALQA…EAAAAAAAAA (130 aa)) are interaction with CLOCK. The tract at residues 2-268 (ADEVALALQA…SCGIPDFRSR (267 aa)) is interaction with H1-4. S14 and S25 each carry phosphoserine. The Nuclear localization signal motif lies at 32-39 (LRKRPRRD). A Phosphoserine; by MAPK8 modification is found at S46. Low complexity-rich tracts occupy residues 46-56 (SPGEPSAAVAP) and 75-94 (EAAG…AVAG). Positions 111 to 123 (DFDDDEGEEEDEA) are enriched in acidic residues. Residues 135 to 533 (RDNLLLTDGL…LHISEDSSSP (399 aa)) are interaction with CCAR2. The Nuclear export signal signature appears at 138 to 145 (LLLTDGLL). Phosphoserine occurs at positions 151, 154, 164, and 165. Positions 152–171 (CESDDDDRTSHASSSDWTPR) are disordered. The short motif at 223 to 230 (PPKRKKRK) is the Nuclear localization signal element. In terms of domain architecture, Deacetylase sirtuin-type spans 228 to 488 (KRKDINTIED…NELCHRLGGE (261 aa)). At K230 the chain carries N6-acetyllysine. The interval 248–251 (IIVL) is required for interaction with the sumoylated form of CCAR2. NAD(+) contacts are provided by residues 253-272 (GAGV…DGIY) and 337-340 (QNID). Catalysis depends on H355, which acts as the Proton acceptor. Residues C363 and C366 each contribute to the Zn(2+) site. The residue at position 369 (K369) is an N6-acetyllysine. C387 and C390 together coordinate Zn(2+). S-nitrosocysteine occurs at positions 387 and 390. At K422 the chain carries N6-acetyllysine. A Nuclear export signal motif is present at residues 425–431 (VDLLIVI). Residues 432–434 (GSS), 457–459 (NRE), and C474 contribute to the NAD(+) site. An N6-acetyllysine modification is found at K505. Positions 514 to 539 (VHLSELPPTPLHISEDSSSPERTVPQ) are disordered. T522 is subject to Phosphothreonine; by DYRK1A, DYRK3 and MAPK8. S527 is subject to Phosphoserine. Over residues 529–539 (DSSSPERTVPQ) the composition is skewed to polar residues. Position 536 is a phosphothreonine (T536). K600 carries the N6-acetyllysine modification. S649 and S651 each carry phosphoserine; by CaMK2. Residues 653–713 (DDVLSSSSCG…GSGFGADGGD (61 aa)) are disordered. Over residues 656–676 (LSSSSCGSNSDSGTCQSPSLE) the composition is skewed to low complexity. Acidic residues predominate over residues 677-697 (EPLEDESEIEEFYNGLEDDTE). At S737 the chain carries Phosphoserine.

It belongs to the sirtuin family. Class I subfamily. Interacts with XBP1 isoform 2. Found in a complex with PCAF and MYOD1 Component of the eNoSC complex, composed of SIRT1, SUV39H1 and RRP8. Interacts with HES1, HEY2 and PML. Interacts with RPS19BP1/AROS. Interacts with CCAR2 (via N-terminus); the interaction disrupts the interaction between SIRT1 and p53/TP53. Interacts with SETD7; the interaction induces the dissociation of SIRT1 from p53/TP53 and increases p53/TP53 activity. Interacts with MYCN, NR1I2, CREBZF, TSC2, TLE1, FOS, JUN, NR0B2, PPARG, NCOR, IRS1, IRS2 and NMNAT1. Interacts with HNF1A; the interaction occurs under nutrient restriction. Interacts with SUZ12; the interaction mediates the association with the PRC4 histone methylation complex which is specific as an association with PCR2 and PCR3 complex variants is not found. Interacts with FOXO1; the interaction deacetylates FOXO1, enhances its DNA-binding ability and increases its transcriptional activity. Interacts with BCL6; leads to a epigenetic repression of specific target genes. Interacts with CLOCK, BMAL1 and PER2. Interacts with PPARA; the interaction seems to be modulated by NAD(+) levels. Interacts with NR1H3 and this interaction is inhibited in the presence of CCAR2. Interacts with CHEK2 and p53/TP53. Exhibits a preferential interaction with sumoylated CCAR2 over its unmodified form. Interacts with PACS2. Interacts with SIRT7. Interacts with PUS7. Interacts with TULP3. Interacts with MORN3; the interaction enhances the ubiquitination of p53/TP53. It depends on Zn(2+) as a cofactor. In terms of processing, methylated on multiple lysine residues; methylation is enhanced after DNA damage and is dispensable for deacetylase activity toward p53/TP53. Phosphorylated. Phosphorylated by STK4/MST1, resulting in inhibition of SIRT1-mediated p53/TP53 deacetylation. Phosphorylation by MAPK8/JNK1 at Ser-46 and Thr-522 leads to increased nuclear localization and enzymatic activity. Phosphorylation at Thr-522 by DYRK1A and DYRK3 activates deacetylase activity and promotes cell survival. Phosphorylation by mammalian target of rapamycin complex 1 (mTORC1) at Ser-46 inhibits deacetylation activity. Phosphorylated by CaMK2, leading to increased p53/TP53 and NF-kappa-B p65/RELA deacetylation activity. Post-translationally, proteolytically cleaved by cathepsin B upon TNF-alpha treatment to yield catalytic inactive but stable SirtT1 75 kDa fragment (75SirT1). In terms of processing, S-nitrosylated by GAPDH, leading to inhibit the NAD-dependent protein deacetylase activity. Acetylated at various Lys residues. Deacetylated via an autocatalytic mechanism. Autodeacetylation at Lys-230 promotes its protein deacetylase activity. Post-translationally, ubiquitinated; leading to degradation. Deubiquitinated by USP22; leading to stabilization. Widely expressed. Weakly expressed in liver and skeletal muscle.

The protein resides in the nucleus. It is found in the PML body. Its subcellular location is the cytoplasm. It localises to the mitochondrion. The catalysed reaction is N(6)-acetyl-L-lysyl-[protein] + NAD(+) + H2O = 2''-O-acetyl-ADP-D-ribose + nicotinamide + L-lysyl-[protein]. The enzyme catalyses N(6)-propanoyl-L-lysyl-[protein] + NAD(+) + H2O = 3''-O-propanoyl-ADP-D-ribose + nicotinamide + L-lysyl-[protein]. It catalyses the reaction N(6)-(2E)-butenoyl-L-lysyl-[protein] + NAD(+) + H2O = 2''-O-(2E)-but-2-enoyl-ADP-D-ribose + nicotinamide + L-lysyl-[protein]. It carries out the reaction N(6)-[(S)-lactoyl]-L-lysyl-[protein] + NAD(+) + H2O = 2''-O-(S)-lactoyl-ADP-D-ribose + nicotinamide + L-lysyl-[protein]. Its activity is regulated as follows. Activated by resveratrol (3,5,4'-trihydroxy-trans-stilbene), butein (3,4,2',4'-tetrahydroxychalcone), piceatannol (3,5,3',4'-tetrahydroxy-trans-stilbene), Isoliquiritigenin (4,2',4'-trihydroxychalcone), fisetin (3,7,3',4'-tetrahydroxyflavone) and quercetin (3,5,7,3',4'-pentahydroxyflavone). MAPK8/JNK1 and RPS19BP1/AROS act as positive regulators of deacetylation activity. Inhibited by nicotinamide. Negatively regulated by CCAR2. Functionally, NAD-dependent protein deacetylase that links transcriptional regulation directly to intracellular energetics and participates in the coordination of several separated cellular functions such as cell cycle, response to DNA damage, metabolism, apoptosis and autophagy. Can modulate chromatin function through deacetylation of histones and can promote alterations in the methylation of histones and DNA, leading to transcriptional repression. Deacetylates a broad range of transcription factors and coregulators, thereby regulating target gene expression positively and negatively. Serves as a sensor of the cytosolic ratio of NAD(+)/NADH which is altered by glucose deprivation and metabolic changes associated with caloric restriction. Is essential in skeletal muscle cell differentiation and in response to low nutrients mediates the inhibitory effect on skeletal myoblast differentiation which also involves 5'-AMP-activated protein kinase (AMPK) and nicotinamide phosphoribosyltransferase (NAMPT). Component of the eNoSC (energy-dependent nucleolar silencing) complex, a complex that mediates silencing of rDNA in response to intracellular energy status and acts by recruiting histone-modifying enzymes. The eNoSC complex is able to sense the energy status of cell: upon glucose starvation, elevation of NAD(+)/NADP(+) ratio activates SIRT1, leading to histone H3 deacetylation followed by dimethylation of H3 at 'Lys-9' (H3K9me2) by SUV39H1 and the formation of silent chromatin in the rDNA locus. Deacetylates 'Lys-266' of SUV39H1, leading to its activation. Inhibits skeletal muscle differentiation by deacetylating PCAF and MYOD1. Deacetylates H2A and 'Lys-26' of H1-4. Deacetylates 'Lys-16' of histone H4 (in vitro). Involved in NR0B2/SHP corepression function through chromatin remodeling: Recruited to LRH1 target gene promoters by NR0B2/SHP thereby stimulating histone H3 and H4 deacetylation leading to transcriptional repression. Proposed to contribute to genomic integrity via positive regulation of telomere length; however, reports on localization to pericentromeric heterochromatin are conflicting. Proposed to play a role in constitutive heterochromatin (CH) formation and/or maintenance through regulation of the available pool of nuclear SUV39H1. Upon oxidative/metabolic stress decreases SUV39H1 degradation by inhibiting SUV39H1 polyubiquitination by MDM2. This increase in SUV39H1 levels enhances SUV39H1 turnover in CH, which in turn seems to accelerate renewal of the heterochromatin which correlates with greater genomic integrity during stress response. Deacetylates 'Lys-382' of p53/TP53 and impairs its ability to induce transcription-dependent proapoptotic program and modulate cell senescence. Deacetylates TAF1B and thereby represses rDNA transcription by the RNA polymerase I. Deacetylates MYC, promotes the association of MYC with MAX and decreases MYC stability leading to compromised transformational capability. Deacetylates FOXO3 in response to oxidative stress thereby increasing its ability to induce cell cycle arrest and resistance to oxidative stress but inhibiting FOXO3-mediated induction of apoptosis transcriptional activity; also leading to FOXO3 ubiquitination and protesomal degradation. Appears to have a similar effect on MLLT7/FOXO4 in regulation of transcriptional activity and apoptosis. Deacetylates DNMT1; thereby impairs DNMT1 methyltransferase-independent transcription repressor activity, modulates DNMT1 cell cycle regulatory function and DNMT1-mediated gene silencing. Deacetylates RELA/NF-kappa-B p65 thereby inhibiting its transactivating potential and augments apoptosis in response to TNF-alpha. Deacetylates HIF1A, KAT5/TIP60, RB1 and HIC1. Deacetylates FOXO1, which increases its DNA binding ability and enhances its transcriptional activity leading to increased gluconeogenesis in liver. Inhibits E2F1 transcriptional activity and apoptotic function, possibly by deacetylation. Involved in HES1- and HEY2-mediated transcriptional repression. In cooperation with MYCN seems to be involved in transcriptional repression of DUSP6/MAPK3 leading to MYCN stabilization by phosphorylation at 'Ser-62'. Deacetylates MEF2D. Required for antagonist-mediated transcription suppression of AR-dependent genes which may be linked to local deacetylation of histone H3. Represses HNF1A-mediated transcription. Required for the repression of ESRRG by CREBZF. Deacetylates NR1H3 and NR1H2 and deacetylation of NR1H3 at 'Lys-434' positively regulates transcription of NR1H3:RXR target genes, promotes NR1H3 proteasomal degradation and results in cholesterol efflux; a promoter clearing mechanism after reach round of transcription is proposed. Involved in lipid metabolism: deacetylates LPIN1, thereby inhibiting diacylglycerol synthesis. Implicated in regulation of adipogenesis and fat mobilization in white adipocytes by repression of PPARG which probably involves association with NCOR1 and SMRT/NCOR2. Deacetylates p300/EP300 and PRMT1. Deacetylates ACSS2 leading to its activation, and HMGCS1 deacetylation. Involved in liver and muscle metabolism. Through deacetylation and activation of PPARGC1A is required to activate fatty acid oxidation in skeletal muscle under low-glucose conditions and is involved in glucose homeostasis. Involved in regulation of PPARA and fatty acid beta-oxidation in liver. Involved in positive regulation of insulin secretion in pancreatic beta cells in response to glucose; the function seems to imply transcriptional repression of UCP2. Proposed to deacetylate IRS2 thereby facilitating its insulin-induced tyrosine phosphorylation. Deacetylates SREBF1 isoform SREBP-1C thereby decreasing its stability and transactivation in lipogenic gene expression. Involved in DNA damage response by repressing genes which are involved in DNA repair, such as XPC and TP73, deacetylating XRCC6/Ku70, and facilitating recruitment of additional factors to sites of damaged DNA, such as SIRT1-deacetylated NBN can recruit ATM to initiate DNA repair and SIRT1-deacetylated XPA interacts with RPA2. Also involved in DNA repair of DNA double-strand breaks by homologous recombination and specifically single-strand annealing independently of XRCC6/Ku70 and NBN. Promotes DNA double-strand breaks by mediating deacetylation of SIRT6. Transcriptional suppression of XPC probably involves an E2F4:RBL2 suppressor complex and protein kinase B (AKT) signaling. Transcriptional suppression of TP73 probably involves E2F4 and PCAF. Deacetylates WRN thereby regulating its helicase and exonuclease activities and regulates WRN nuclear translocation in response to DNA damage. Deacetylates APEX1 at 'Lys-6' and 'Lys-7' and stimulates cellular AP endonuclease activity by promoting the association of APEX1 to XRCC1. Catalyzes deacetylation of ERCC4/XPF, thereby impairing interaction with ERCC1 and nucleotide excision repair (NER). Increases p53/TP53-mediated transcription-independent apoptosis by blocking nuclear translocation of cytoplasmic p53/TP53 and probably redirecting it to mitochondria. Deacetylates XRCC6/Ku70 at 'Lys-537' and 'Lys-540' causing it to sequester BAX away from mitochondria thereby inhibiting stress-induced apoptosis. Is involved in autophagy, presumably by deacetylating ATG5, ATG7 and MAP1LC3B/ATG8. Deacetylates AKT1 which leads to enhanced binding of AKT1 and PDK1 to PIP3 and promotes their activation. Proposed to play role in regulation of STK11/LBK1-dependent AMPK signaling pathways implicated in cellular senescence which seems to involve the regulation of the acetylation status of STK11/LBK1. Can deacetylate STK11/LBK1 and thereby increase its activity, cytoplasmic localization and association with STRAD; however, the relevance of such activity in normal cells is unclear. In endothelial cells is shown to inhibit STK11/LBK1 activity and to promote its degradation. Deacetylates SMAD7 at 'Lys-64' and 'Lys-70' thereby promoting its degradation. Deacetylates CIITA and augments its MHC class II transactivation and contributes to its stability. Deacetylates MECOM/EVI1. Deacetylates PML at 'Lys-487' and this deacetylation promotes PML control of PER2 nuclear localization. During the neurogenic transition, represses selective NOTCH1-target genes through histone deacetylation in a BCL6-dependent manner and leading to neuronal differentiation. Regulates the circadian expression of several core clock genes, including BMAL1, RORC, PER2 and CRY1 and plays a critical role in maintaining a controlled rhythmicity in histone acetylation, thereby contributing to circadian chromatin remodeling. Deacetylates BMAL1 and histones at the circadian gene promoters in order to facilitate repression by inhibitory components of the circadian oscillator. Deacetylates PER2, facilitating its ubiquitination and degradation by the proteasome. Protects cardiomyocytes against palmitate-induced apoptosis. Deacetylates XBP1 isoform 2; deacetylation decreases protein stability of XBP1 isoform 2 and inhibits its transcriptional activity. Deacetylates PCK1 and directs its activity toward phosphoenolpyruvate production promoting gluconeogenesis. Involved in the CCAR2-mediated regulation of PCK1 and NR1D1. Deacetylates CTNB1 at 'Lys-49'. In POMC (pro-opiomelanocortin) neurons, required for leptin-induced activation of PI3K signaling. Deacetylates SOX9; promoting SOX9 nuclear localization and transactivation activity. Involved in the regulation of centrosome duplication: Deacetylates CENATAC in G1 phase, allowing for SASS6 accumulation on the centrosome and subsequent procentriole assembly. Deacetylates NDC80/HEC1. In addition to protein deacetylase activity, also acts as a protein-lysine deacylase by mediating protein delactylation, depropionylation and decrotonylation. Mediates depropionylation of Osterix (SP7). Catalyzes decrotonylation of histones; it however does not represent a major histone decrotonylase. Mediates protein delactylation of TEAD1 and YAP1. Deacetylates 'Lys-382' of p53/TP53, however with lower activity than isoform 1. In combination, the two isoforms exert an additive effect. Isoform 2 regulates p53/TP53 expression and cellular stress response and is in turn repressed by p53/TP53 presenting a SIRT1 isoform-dependent auto-regulatory loop. In terms of biological role, catalytically inactive 75SirT1 may be involved in regulation of apoptosis. May be involved in protecting chondrocytes from apoptotic death by associating with cytochrome C and interfering with apoptosome assembly. This Mus musculus (Mouse) protein is NAD-dependent protein deacetylase sirtuin-1 (Sirt1).